The primary structure comprises 354 residues: Fructose-bisphosphate aldolase (354 aa).

Position 50 (S50) interacts with D-glyceraldehyde 3-phosphate. D83 acts as the Proton donor in catalysis. Residues H84, D105, E142, and H198 each contribute to the Zn(2+) site. G199 lines the dihydroxyacetone phosphate pocket. Residue H232 participates in Zn(2+) binding. Residues 233–235 (GSS) and 275–278 (NIDT) contribute to the dihydroxyacetone phosphate site.

It belongs to the class II fructose-bisphosphate aldolase family. Zn(2+) is required as a cofactor.

The catalysed reaction is beta-D-fructose 1,6-bisphosphate = D-glyceraldehyde 3-phosphate + dihydroxyacetone phosphate. The protein operates within carbohydrate degradation; glycolysis; D-glyceraldehyde 3-phosphate and glycerone phosphate from D-glucose: step 4/4. Functionally, catalyzes the aldol condensation of dihydroxyacetone phosphate (DHAP or glycerone-phosphate) with glyceraldehyde 3-phosphate (G3P) to form fructose 1,6-bisphosphate (FBP) in gluconeogenesis and the reverse reaction in glycolysis. The chain is Fructose-bisphosphate aldolase (fba) from Pseudomonas aeruginosa (strain ATCC 15692 / DSM 22644 / CIP 104116 / JCM 14847 / LMG 12228 / 1C / PRS 101 / PAO1).